The following is a 390-amino-acid chain: Cathepsin D (390 aa).

The propeptide at 1-44 (VIRIPLHKFTSIRRTMSEAAGXVXXLIAKGPISKYATGEPAVRQ) is activation peptide. Positions 59–385 (YYGEIGIGTP…DRDQNRVGLA (327 aa)) constitute a Peptidase A1 domain. 2 cysteine pairs are disulfide-bonded: Cys-71-Cys-140 and Cys-90-Cys-97. Asp-77 is a catalytic residue. N-linked (GlcNAc...) asparagine glycans are attached at residues Asn-114 and Asn-241. Cys-264 and Cys-268 are joined by a disulfide. The active site involves Asp-273. A disulfide bridge connects residues Cys-307 and Cys-344.

The protein belongs to the peptidase A1 family. In terms of assembly, consists of a light chain and a heavy chain. Interacts with ADAM30; this leads to activation of CTSD. Interacts with GRN; stabilizes CTSD; increases its proteolytic activity. Post-translationally, N- and O-glycosylated. Undergoes proteolytic cleavage and activation by ADAM30.

The protein resides in the lysosome. It is found in the melanosome. Its subcellular location is the secreted. The protein localises to the extracellular space. It carries out the reaction Specificity similar to, but narrower than, that of pepsin A. Does not cleave the 4-Gln-|-His-5 bond in B chain of insulin.. Acid protease active in intracellular protein breakdown. Plays a role in APP processing following cleavage and activation by ADAM30 which leads to APP degradation. The polypeptide is Cathepsin D (CTSD) (Bos taurus (Bovine)).